The sequence spans 449 residues: N-succinylarginine dihydrolase (449 aa).

Substrate is bound by residues 19–28 (GGLSYGNVAS), asparagine 110, and 137–138 (HR). The disordered stretch occupies residues 23–43 (YGNVASQSNSQQASNPREAAR). Residues 27-37 (ASQSNSQQASN) show a composition bias toward low complexity. Residue glutamate 174 is part of the active site. Substrate is bound at residue arginine 214. Histidine 250 is a catalytic residue. Aspartate 252 and asparagine 365 together coordinate substrate. Cysteine 371 serves as the catalytic Nucleophile.

The protein belongs to the succinylarginine dihydrolase family. As to quaternary structure, homodimer.

The enzyme catalyses N(2)-succinyl-L-arginine + 2 H2O + 2 H(+) = N(2)-succinyl-L-ornithine + 2 NH4(+) + CO2. It functions in the pathway amino-acid degradation; L-arginine degradation via AST pathway; L-glutamate and succinate from L-arginine: step 2/5. Catalyzes the hydrolysis of N(2)-succinylarginine into N(2)-succinylornithine, ammonia and CO(2). This is N-succinylarginine dihydrolase from Pseudomonas putida (strain ATCC 47054 / DSM 6125 / CFBP 8728 / NCIMB 11950 / KT2440).